The chain runs to 153 residues: Ribonuclease H (153 aa).

Residues 1-142 enclose the RNase H type-1 domain; the sequence is MTDQIEIFTD…ADELARRGVD (142 aa). Mg(2+) is bound by residues aspartate 10, glutamate 48, aspartate 70, and aspartate 134.

It belongs to the RNase H family. As to quaternary structure, monomer. It depends on Mg(2+) as a cofactor.

The protein resides in the cytoplasm. It catalyses the reaction Endonucleolytic cleavage to 5'-phosphomonoester.. Its function is as follows. Endonuclease that specifically degrades the RNA of RNA-DNA hybrids. The chain is Ribonuclease H from Aromatoleum aromaticum (strain DSM 19018 / LMG 30748 / EbN1) (Azoarcus sp. (strain EbN1)).